The sequence spans 344 residues: Sulfate/thiosulfate import ATP-binding protein CysA (344 aa).

Positions 9–239 (IQVSQVSKQF…PATPFVMSFI (231 aa)) constitute an ABC transporter domain. Residue 41-48 (GPSGSGKS) participates in ATP binding.

The protein belongs to the ABC transporter superfamily. Sulfate/tungstate importer (TC 3.A.1.6) family. As to quaternary structure, the complex is composed of two ATP-binding proteins (CysA), two transmembrane proteins (CysT and CysW) and a solute-binding protein (CysP).

The protein localises to the cell inner membrane. The enzyme catalyses sulfate(out) + ATP + H2O = sulfate(in) + ADP + phosphate + H(+). It catalyses the reaction thiosulfate(out) + ATP + H2O = thiosulfate(in) + ADP + phosphate + H(+). Functionally, part of the ABC transporter complex CysAWTP involved in sulfate/thiosulfate import. Responsible for energy coupling to the transport system. In Synechococcus elongatus (strain ATCC 33912 / PCC 7942 / FACHB-805) (Anacystis nidulans R2), this protein is Sulfate/thiosulfate import ATP-binding protein CysA.